A 132-amino-acid polypeptide reads, in one-letter code: C-glycoside deglycosidase beta subunit (132 aa).

Belongs to the C-glycoside deglycosidase beta subunit family. As to quaternary structure, heterodimer composed of an alpha subunit (CarB2) and a beta subunit (CarC2). A divalent metal cation serves as cofactor.

It catalyses the reaction 3''-dehydroorientin = 1,5-anhydro-D-erythro-hex-1-en-3-ulose + luteolin. Its activity is regulated as follows. Activity is strongly reduced in the presence of chelating agents. Functionally, carbon-carbon bond-cleaving enzyme which participates in the metabolism of C-glycosides. Acts on the C8-glycosylated compound 3''-dehydroorientin (3''-oxo-orientin). This Arthrobacter globiformis (strain ATCC 8010 / DSM 20124 / JCM 1332 / NBRC 12137 / NCIMB 8907 / NRRL B-2979 / 168) protein is C-glycoside deglycosidase beta subunit.